We begin with the raw amino-acid sequence, 352 residues long: Putative F-box protein At5g14160 (352 aa).

Residues 14–60 (GVDWSELPEDVIRLVLRRLRLSDFHRARAVCSTWCRVWGDCVSKPNQ) enclose the F-box domain.

The chain is Putative F-box protein At5g14160 from Arabidopsis thaliana (Mouse-ear cress).